Here is a 129-residue protein sequence, read N- to C-terminus: MPTYNQLVRFERKSKVRKTKSPALEANPFKSGVCLVVKTVTPKKPNSALRKVATVRLSNKRTVNVYIPGEKHSVKEHDRVLVRGGQVPDLPGVKYHVVLGAYDIAGVKGRKQGRSRYGAPRKQVVATKK.

D89 is subject to 3-methylthioaspartic acid. A disordered region spans residues 110–129; sequence RKQGRSRYGAPRKQVVATKK.

It belongs to the universal ribosomal protein uS12 family. Part of the 30S ribosomal subunit. Contacts proteins S8 and S17. May interact with IF1 in the 30S initiation complex.

Functionally, with S4 and S5 plays an important role in translational accuracy. In terms of biological role, interacts with and stabilizes bases of the 16S rRNA that are involved in tRNA selection in the A site and with the mRNA backbone. Located at the interface of the 30S and 50S subunits, it traverses the body of the 30S subunit contacting proteins on the other side and probably holding the rRNA structure together. The combined cluster of proteins S8, S12 and S17 appears to hold together the shoulder and platform of the 30S subunit. In Rickettsia bellii (strain RML369-C), this protein is Small ribosomal subunit protein uS12.